The primary structure comprises 88 residues: MLTAQDKQKIIKENQLAEGDTGSPEVQVALLTARINDLQGHFETHKKDNHSRRGLLRLVSQRRKLLDYLHDKDVERYRSLIKKLNIRR.

It belongs to the universal ribosomal protein uS15 family. As to quaternary structure, part of the 30S ribosomal subunit. Forms a bridge to the 50S subunit in the 70S ribosome, contacting the 23S rRNA.

One of the primary rRNA binding proteins, it binds directly to 16S rRNA where it helps nucleate assembly of the platform of the 30S subunit by binding and bridging several RNA helices of the 16S rRNA. In terms of biological role, forms an intersubunit bridge (bridge B4) with the 23S rRNA of the 50S subunit in the ribosome. The sequence is that of Small ribosomal subunit protein uS15 from Francisella tularensis subsp. novicida (strain U112).